An 861-amino-acid chain; its full sequence is Integrator complex subunit 6-like (861 aa).

One can recognise a VWFA domain in the interval 3 to 227 (ILLFLIDTSA…QCLESLVQKV (225 aa)). The residue at position 617 (Ser-617) is a Phosphoserine.

In Mus musculus (Mouse), this protein is Integrator complex subunit 6-like (Ints6l).